The following is a 331-amino-acid chain: Biotin synthase (331 aa).

Positions 53 to 271 constitute a Radical SAM core domain; sequence TELQLSQLLS…IAVARIVCPK (219 aa). Residues Cys-68, Cys-72, and Cys-75 each contribute to the [4Fe-4S] cluster site. 4 residues coordinate [2Fe-2S] cluster: Cys-112, Cys-143, Cys-203, and Arg-275.

This sequence belongs to the radical SAM superfamily. Biotin synthase family. In terms of assembly, homodimer. [4Fe-4S] cluster serves as cofactor. It depends on [2Fe-2S] cluster as a cofactor.

It carries out the reaction (4R,5S)-dethiobiotin + (sulfur carrier)-SH + 2 reduced [2Fe-2S]-[ferredoxin] + 2 S-adenosyl-L-methionine = (sulfur carrier)-H + biotin + 2 5'-deoxyadenosine + 2 L-methionine + 2 oxidized [2Fe-2S]-[ferredoxin]. Its pathway is cofactor biosynthesis; biotin biosynthesis; biotin from 7,8-diaminononanoate: step 2/2. Functionally, catalyzes the conversion of dethiobiotin (DTB) to biotin by the insertion of a sulfur atom into dethiobiotin via a radical-based mechanism. The polypeptide is Biotin synthase (Phenylobacterium zucineum (strain HLK1)).